Here is a 503-residue protein sequence, read N- to C-terminus: Probable cytosol aminopeptidase (503 aa).

Positions 272 and 277 each coordinate Mn(2+). The active site involves K284. D295, D354, and E356 together coordinate Mn(2+). R358 is a catalytic residue.

The protein belongs to the peptidase M17 family. Mn(2+) serves as cofactor.

It localises to the cytoplasm. The catalysed reaction is Release of an N-terminal amino acid, Xaa-|-Yaa-, in which Xaa is preferably Leu, but may be other amino acids including Pro although not Arg or Lys, and Yaa may be Pro. Amino acid amides and methyl esters are also readily hydrolyzed, but rates on arylamides are exceedingly low.. The enzyme catalyses Release of an N-terminal amino acid, preferentially leucine, but not glutamic or aspartic acids.. Its function is as follows. Presumably involved in the processing and regular turnover of intracellular proteins. Catalyzes the removal of unsubstituted N-terminal amino acids from various peptides. This is Probable cytosol aminopeptidase from Chlorobium limicola (strain DSM 245 / NBRC 103803 / 6330).